Consider the following 131-residue polypeptide: Transcription antitermination protein NusB (131 aa).

It belongs to the NusB family.

Its function is as follows. Involved in transcription antitermination. Required for transcription of ribosomal RNA (rRNA) genes. Binds specifically to the boxA antiterminator sequence of the ribosomal RNA (rrn) operons. This Ligilactobacillus salivarius (strain UCC118) (Lactobacillus salivarius) protein is Transcription antitermination protein NusB.